The chain runs to 150 residues: Protein ORF35 (150 aa).

This Homo sapiens (Human) protein is Protein ORF35 (ORF35).